A 75-amino-acid polypeptide reads, in one-letter code: UPF0352 protein YejL (75 aa).

The protein belongs to the UPF0352 family.

In Shigella flexneri, this protein is UPF0352 protein YejL.